The primary structure comprises 113 residues: U11-theraphotoxin-Hhn1a (113 aa).

The first 21 residues, 1 to 21, serve as a signal peptide directing secretion; the sequence is MNTVRVTFLLVFVLAVSLGQA. The propeptide occupies 22–74; the sequence is DKDENRMEMQEKTEQGNSYLDFAENLPLQKLEELEAKLLEEDSEESRNSRQKR. Positions 60-69 are enriched in basic and acidic residues; the sequence is LEEDSEESRN. The interval 60-83 is disordered; the sequence is LEEDSEESRNSRQKRCIGEGVPCD. 3 disulfide bridges follow: Cys75–Cys90, Cys82–Cys95, and Cys89–Cys110.

This sequence belongs to the neurotoxin 14 (magi-1) family. 01 (HNTX-16) subfamily. Expressed by the venom gland.

The protein localises to the secreted. Functionally, probable ion channel inhibitor. This Cyriopagopus hainanus (Chinese bird spider) protein is U11-theraphotoxin-Hhn1a.